A 420-amino-acid polypeptide reads, in one-letter code: Threonine aspartase 1 (420 aa).

The disordered stretch occupies residues 1–25; it reads MIMEKGMNSGEGLPSRSSQASAAKV. Threonine 234 functions as the Nucleophile in the catalytic mechanism.

This sequence belongs to the Ntn-hydrolase family. In terms of assembly, intramolecular proteolysis generates 2 subunits, alpha and beta, which reassemble through a non-covalent association to form the fully active enzyme.

In terms of biological role, protease responsible for KMT2A/MLL1 and KMT2D/MLL2 processing and activation. Through substrate activation, it controls the expression of HOXA genes, and the expression of key cell cycle regulators including CCNA1, CCNB1, CCNE1 and CDKN2A. The sequence is that of Threonine aspartase 1 (Tasp1) from Mus musculus (Mouse).